The sequence spans 314 residues: uncharacterized protein (314 aa).

The signal sequence occupies residues 1–18 (MLIQILFLIILTLNCSYS). Asn-68, Asn-72, Asn-106, and Asn-256 each carry an N-linked (GlcNAc...) asparagine glycan.

The protein localises to the secreted. This is an uncharacterized protein from Caenorhabditis elegans.